Here is a 298-residue protein sequence, read N- to C-terminus: Ethanolamine ammonia-lyase small subunit (298 aa).

Adenosylcob(III)alamin-binding residues include valine 210, glutamate 231, and cysteine 261.

This sequence belongs to the EutC family. The basic unit is a heterodimer which dimerizes to form tetramers. The heterotetramers trimerize; 6 large subunits form a core ring with 6 small subunits projecting outwards. Adenosylcob(III)alamin is required as a cofactor.

The protein resides in the bacterial microcompartment. The catalysed reaction is ethanolamine = acetaldehyde + NH4(+). The protein operates within amine and polyamine degradation; ethanolamine degradation. Its function is as follows. Catalyzes the deamination of various vicinal amino-alcohols to oxo compounds. Allows this organism to utilize ethanolamine as the sole source of nitrogen and carbon in the presence of external vitamin B12. The chain is Ethanolamine ammonia-lyase small subunit from Salmonella dublin (strain CT_02021853).